The primary structure comprises 364 residues: GTPase Obg (364 aa).

One can recognise an Obg domain in the interval 1–159 (MKFVDEAYID…KSLKLELKVL (159 aa)). Residues 160–334 (ADVGLLGMPN…LVKTIYQHVK (175 aa)) form the OBG-type G domain. Residues 166 to 173 (GMPNAGKS), 191 to 195 (FTTLH), 213 to 216 (DLPG), 284 to 287 (NKLD), and 315 to 317 (SAL) each bind GTP. Mg(2+) is bound by residues serine 173 and threonine 193. The disordered stretch occupies residues 337 to 364 (QKSEQPEEEVDPRFIELPPEPAKPASSD).

It belongs to the TRAFAC class OBG-HflX-like GTPase superfamily. OBG GTPase family. Monomer. Mg(2+) is required as a cofactor.

The protein localises to the cytoplasm. In terms of biological role, an essential GTPase which binds GTP, GDP and possibly (p)ppGpp with moderate affinity, with high nucleotide exchange rates and a fairly low GTP hydrolysis rate. Plays a role in control of the cell cycle, stress response, ribosome biogenesis and in those bacteria that undergo differentiation, in morphogenesis control. This is GTPase Obg from Polaromonas naphthalenivorans (strain CJ2).